The sequence spans 375 residues: Palmitoyltransferase PFA4 (375 aa).

At 1 to 9 (MAVLVKWPW) the chain is on the cytoplasmic side. The chain crosses the membrane as a helical span at residues 10–30 (LGVAIPCFLISFTGYFAHFFV). At 31 to 33 (LTN) the chain is on the lumenal side. Residues 34–54 (FLSFKELLWFQVSLSMIWISY) traverse the membrane as a helical segment. The Cytoplasmic portion of the chain corresponds to 55–121 (WKAIYKNPGR…MNCVGYKNFP (67 aa)). The region spanning 78-128 (NYCTKCETYKPERTHHCKRCNQCVLVMDHHCPWTMNCVGYKNFPHFIRFLF) is the DHHC domain. Catalysis depends on C108, which acts as the S-palmitoyl cysteine intermediate. A helical membrane pass occupies residues 122–142 (HFIRFLFWIIATTGILLHYFV). At 143-164 (KRIKFTWVNRYATANLVSKQEL) the chain is on the lumenal side. A helical transmembrane segment spans residues 165–185 (IFLTILTPLDAFILLTISLLF). The Cytoplasmic portion of the chain corresponds to 186–375 (VRCVKNQIVN…EHFGVDVEVE (190 aa)).

The protein belongs to the DHHC palmitoyltransferase family. PFA4 subfamily.

The protein resides in the endoplasmic reticulum membrane. It carries out the reaction L-cysteinyl-[protein] + hexadecanoyl-CoA = S-hexadecanoyl-L-cysteinyl-[protein] + CoA. Its function is as follows. Mediates the reversible addition of palmitate to target proteins, thereby regulating their membrane association and biological function. This Eremothecium gossypii (strain ATCC 10895 / CBS 109.51 / FGSC 9923 / NRRL Y-1056) (Yeast) protein is Palmitoyltransferase PFA4.